Consider the following 644-residue polypeptide: Replication protein E1 (644 aa).

Positions K86–K88 match the Nuclear localization signal motif. The DNA-binding region stretch occupies residues C179–D345. Residues L312–S644 form a required for E2 binding region. The SF3 helicase domain maps to I444–V594. ATP is bound at residue G470–S477. Residue K551 forms a Glycyl lysine isopeptide (Lys-Gly) (interchain with G-Cter in SUMO) linkage.

Belongs to the papillomaviridae E1 protein family. Can form hexamers. Interacts with E2 protein; this interaction increases E1 DNA binding specificity. Interacts with host DNA polymerase subunit POLA2. Interacts with host single stranded DNA-binding protein RPA1. Interacts with host TOP1; this interaction stimulates the enzymatic activity of TOP1. In terms of processing, phosphorylated. Sumoylated.

It localises to the host nucleus. It catalyses the reaction Couples ATP hydrolysis with the unwinding of duplex DNA by translocating in the 3'-5' direction.. The enzyme catalyses ATP + H2O = ADP + phosphate + H(+). In terms of biological role, ATP-dependent DNA 3'-5' helicase required for initiation of viral DNA replication. It forms a complex with the viral E2 protein. The E1-E2 complex binds to the replication origin which contains binding sites for both proteins. During the initial step, a dimer of E1 interacts with a dimer of protein E2 leading to a complex that binds the viral origin of replication with high specificity. Then, a second dimer of E1 displaces the E2 dimer in an ATP-dependent manner to form the E1 tetramer. Following this, two E1 monomers are added to each half of the site, which results in the formation of two E1 trimers on the viral ori. Subsequently, two hexamers will be created. The double hexamer acts as a bi-directional helicase machinery and unwinds the viral DNA and then recruits the host DNA polymerase to start replication. The sequence is that of Replication protein E1 from Human papillomavirus 33.